The chain runs to 158 residues: MKLNEIKDNEGSTHSRKRLGRGIGSGSGKTGGRGVKGQKSRSGVAINGFEGGQMPIYRRLPKRGFNNIFASDFVVVSLARIQAAIDAGKLDAKATVDAAALKAAGVIRRAKDGVRVLADGELKAKITIVVAGASKPAVEKIEKAGGSVTLLSAPAAAE.

Residues 1 to 13 (MKLNEIKDNEGST) show a composition bias toward basic and acidic residues. Residues 1–45 (MKLNEIKDNEGSTHSRKRLGRGIGSGSGKTGGRGVKGQKSRSGVA) form a disordered region. Positions 21–35 (RGIGSGSGKTGGRGV) are enriched in gly residues.

Belongs to the universal ribosomal protein uL15 family. Part of the 50S ribosomal subunit.

Its function is as follows. Binds to the 23S rRNA. In Rhizobium etli (strain CIAT 652), this protein is Large ribosomal subunit protein uL15.